A 407-amino-acid polypeptide reads, in one-letter code: Na(+)-translocating NADH-quinone reductase subunit F (407 aa).

A helical membrane pass occupies residues 3 to 23 (ITLGIAMFTVIVLALAVIILF). Residues 32–126 (GDITIEINDD…SMKVELPEEV (95 aa)) enclose the 2Fe-2S ferredoxin-type domain. Positions 69, 75, 78, and 110 each coordinate [2Fe-2S] cluster. In terms of domain architecture, FAD-binding FR-type spans 129 to 269 (VKKWECTVIS…SGPFGEFFAK (141 aa)). Positions 272-389 (DAEMVFVGGG…PIMNASVIKM (118 aa)) are catalytic.

Belongs to the NqrF family. In terms of assembly, composed of six subunits; NqrA, NqrB, NqrC, NqrD, NqrE and NqrF. Requires [2Fe-2S] cluster as cofactor. The cofactor is FAD.

The protein resides in the cell inner membrane. It catalyses the reaction a ubiquinone + n Na(+)(in) + NADH + H(+) = a ubiquinol + n Na(+)(out) + NAD(+). NQR complex catalyzes the reduction of ubiquinone-1 to ubiquinol by two successive reactions, coupled with the transport of Na(+) ions from the cytoplasm to the periplasm. The first step is catalyzed by NqrF, which accepts electrons from NADH and reduces ubiquinone-1 to ubisemiquinone by a one-electron transfer pathway. The sequence is that of Na(+)-translocating NADH-quinone reductase subunit F from Pasteurella multocida (strain Pm70).